A 1836-amino-acid polypeptide reads, in one-letter code: Druantia protein DruE (1836 aa).

Residues 108 to 405 (SFLGEDASDL…FAQDLTGLSP (298 aa)) enclose the Helicase ATP-binding domain. Residue 121–128 (TGTGSGKT) coordinates ATP. The DEAH box signature appears at 347–350 (DEAH). In terms of domain architecture, Helicase C-terminal spans 1014 to 1199 (DCTALMPFAL…EVKVNNPKIA (186 aa)).

It is found in the cytoplasm. Functionally, component of antiviral defense system Druantia type I, composed of DruA, DruB, DruC, DruD and DruE. Expression of Druantia in E.coli (strain MG1655) confers resistance to phage lambda, SECphi18, SECphi27 and T4. This protein is probably a helicase. This Escherichia coli (strain UMEA 4076-1) protein is Druantia protein DruE.